The following is a 464-amino-acid chain: Soluble pyridine nucleotide transhydrogenase (464 aa).

Residue 35–44 (DSRRQVGGNC) coordinates FAD.

This sequence belongs to the class-I pyridine nucleotide-disulfide oxidoreductase family. It depends on FAD as a cofactor.

It is found in the cytoplasm. The catalysed reaction is NAD(+) + NADPH = NADH + NADP(+). Functionally, conversion of NADPH, generated by peripheral catabolic pathways, to NADH, which can enter the respiratory chain for energy generation. In Pseudomonas fluorescens (strain SBW25), this protein is Soluble pyridine nucleotide transhydrogenase.